The sequence spans 214 residues: ATP synthase subunit a (214 aa).

6 helical membrane-spanning segments follow: residues 9–29, 64–84, 88–108, 121–141, 150–170, and 182–202; these read LDGM…VFMI, IMMV…TYGI, LWVN…SGYI, SGAP…SIMI, LVAN…VLSS, and LIMV…AYIF.

It belongs to the ATPase A chain family. As to quaternary structure, F-type ATPases have 2 components, CF(1) - the catalytic core - and CF(0) - the membrane proton channel. CF(1) has five subunits: alpha(3), beta(3), gamma(1), delta(1), epsilon(1). CF(0) has three main subunits: a, b and c.

It localises to the mitochondrion inner membrane. Functionally, mitochondrial membrane ATP synthase (F(1)F(0) ATP synthase or Complex V) produces ATP from ADP in the presence of a proton gradient across the membrane which is generated by electron transport complexes of the respiratory chain. F-type ATPases consist of two structural domains, F(1) - containing the extramembraneous catalytic core and F(0) - containing the membrane proton channel, linked together by a central stalk and a peripheral stalk. During catalysis, ATP synthesis in the catalytic domain of F(1) is coupled via a rotary mechanism of the central stalk subunits to proton translocation. Key component of the proton channel; it may play a direct role in the translocation of protons across the membrane. This Albinaria caerulea (Land snail) protein is ATP synthase subunit a (ATP6).